We begin with the raw amino-acid sequence, 628 residues long: EIN3-binding F-box protein 1 (628 aa).

In terms of domain architecture, F-box spans 61–109 (PVSIDVLPDECLFEIFRRLSGPQERSACAFVSKQWLTLVSSIRQKEIDV).

Part of a SCF (SKP1-cullin-F-box) protein ligase complex. Interacts with CUL1, SKP1A/ASK1, SKP1B/ASK2, ASK11, ASK12, ASK13, ASK18, EIN3, and EIL1. In terms of tissue distribution, ubiquitous.

It localises to the nucleus. It participates in protein modification; protein ubiquitination. Component of SCF(EBF1) E3 ubiquitin ligase complexes, which may mediate the ubiquitination and subsequent proteasomal degradation of target proteins (probably including EIN3 and EIL1). Regulator of the ethylene signaling cascade by modulating the stability of EIN3 and EIL1 proteins. Confers insensitivity to ethylene. The chain is EIN3-binding F-box protein 1 (EBF1) from Arabidopsis thaliana (Mouse-ear cress).